The primary structure comprises 310 residues: N-acetyl-gamma-glutamyl-phosphate reductase (310 aa).

Cysteine 117 is a catalytic residue.

It belongs to the NAGSA dehydrogenase family. Type 2 subfamily.

The protein localises to the cytoplasm. The enzyme catalyses N-acetyl-L-glutamate 5-semialdehyde + phosphate + NADP(+) = N-acetyl-L-glutamyl 5-phosphate + NADPH + H(+). It participates in amino-acid biosynthesis; L-arginine biosynthesis; N(2)-acetyl-L-ornithine from L-glutamate: step 3/4. Catalyzes the NADPH-dependent reduction of N-acetyl-5-glutamyl phosphate to yield N-acetyl-L-glutamate 5-semialdehyde. The chain is N-acetyl-gamma-glutamyl-phosphate reductase from Rhizobium rhizogenes (strain K84 / ATCC BAA-868) (Agrobacterium radiobacter).